We begin with the raw amino-acid sequence, 190 residues long: MFGMIKNSLLGGVENNEGKLVSKGEKDGVAFEEREYEGGKFISTEVSGKPFDEASKEGVLRLLKYVGGSNNKSAGMGMTSPVIINSYPSENDTLQPNVKVLLRIPSQYQADPPVPTDNTIQIEDRESVTLYSTQFGGYAKEADYVSHAAKLRSCLGPDISYHSDYYMCCGYDPPMKPYGRRNEVWFIKNN.

The protein belongs to the HEBP family. Monomer.

Its subcellular location is the cytoplasm. May bind free porphyrinogens that may be present in the cell and thus facilitate removal of these potentially toxic compound. Binds with a high affinity to one molecule of heme or porphyrins. It binds metalloporphyrins, free porphyrins and N-methylprotoporphyrin with similar affinities. The chain is Heme-binding protein 1 (hebp1) from Xenopus laevis (African clawed frog).